Consider the following 940-residue polypeptide: MSDYKSTLNLPETEFPMRGNLANREPAMLERWNKDKLYQQIRDSRIGRKPFILHDGPPYANGSIHIGHSVNKILKDIIIKSKTLAGFDAPYVPGWDCHGLPIELKVEQKVGKPGQKISAAEFREECRKYAAAQVDGQREDFIRLGVLGDWHKPYLTMDFATEANIVRSLAKVISNGHLQKGVKPVHWCTDCGSALAEAEVEYEDKTSPAIDVGFNVVDKPALLAKFGVAQYNHDIAMVIWTTTPWTLPANRALAIAADLEYVLVSFTKEDVTRAIVVADVLHEDCVKRFGAESFEVLGRIKGSELELTRFAHPFLDFDVPVILGDHVTTDAGTGVVHTAPGHGQDDFVVGQKYGLEVANPVGDNGVYKADTPFFAGQHVFKANDNVVALLKEKGALLNHVAYRHSYPHCWRHKTPIIFRATPQWFISMDNQGLRSTALSEIQNTQWIPDWGQSRIETMVANRPDWCISRQRTWGVPITLFVNKENEELHPNSVSLMERVANRIEQHGIQAWWDLDAAELLGDEAEQYRKVTDTLDVWYDSGSTFETVVAARPEFQGHGVDLYLEGSDQHRGWFMSSLMLSTAMHAKAPYKQVLTHGFTVDGKGRKMSKSIGNVIAPQEVTNKLGADILRLWVAATDYSGEMSVSDEILNRAADSYRRIRNTGRFLLANLNGFEPEADMVAVADMVALDRWMVRRAAKVQSEIIAAYEQYNFHLVTHKLMQFCSVELGSFYLDIIKDRQYTAKRESHARRSCQSALFHIAEAMVRWIAPVLSFTADEIWQLLPGKREAYVFTQEWYEGLESITLESDLADSHWELLLSVRNEVNKELEQARRDKVLGGSLEATVTLYADTELAAKVAVLGDELRFVLLTSDAKVLPIDAAPESAVATELAGLKVLVAKTEAAKCERCWHHREDVGSVEAHPSLCGRCVTNIEGEGEARAFA.

The 'HIGH' region signature appears at 58-68 (PYANGSIHIGH). Glutamate 564 lines the L-isoleucyl-5'-AMP pocket. The short motif at 605 to 609 (KMSKS) is the 'KMSKS' region element. Lysine 608 serves as a coordination point for ATP. Positions 903, 906, 923, and 926 each coordinate Zn(2+).

Belongs to the class-I aminoacyl-tRNA synthetase family. IleS type 1 subfamily. In terms of assembly, monomer. Requires Zn(2+) as cofactor.

Its subcellular location is the cytoplasm. It catalyses the reaction tRNA(Ile) + L-isoleucine + ATP = L-isoleucyl-tRNA(Ile) + AMP + diphosphate. Catalyzes the attachment of isoleucine to tRNA(Ile). As IleRS can inadvertently accommodate and process structurally similar amino acids such as valine, to avoid such errors it has two additional distinct tRNA(Ile)-dependent editing activities. One activity is designated as 'pretransfer' editing and involves the hydrolysis of activated Val-AMP. The other activity is designated 'posttransfer' editing and involves deacylation of mischarged Val-tRNA(Ile). The polypeptide is Isoleucine--tRNA ligase (Shewanella amazonensis (strain ATCC BAA-1098 / SB2B)).